The sequence spans 205 residues: Beta-crystallin B2 (205 aa).

Alanine 2 is subject to N-acetylalanine. The tract at residues 2–16 (ASDHQSPATKQQQPS) is N-terminal arm. 2 consecutive Beta/gamma crystallin 'Greek key' domains span residues 17–56 (SKIV…LVHS) and 57–101 (GPWV…RPIK). Positions 102 to 106 (VDSQE) are connecting peptide. Beta/gamma crystallin 'Greek key' domains lie at 107 to 148 (HKIV…RVQS) and 149 to 191 (GTWV…RRIR). The interval 193-205 (MQWHQRGTFHPTN) is C-terminal arm.

It belongs to the beta/gamma-crystallin family. In terms of assembly, homo/heterodimer, or complexes of higher-order. The structure of beta-crystallin oligomers seems to be stabilized through interactions between the N-terminal arms. Post-translationally, the N-terminus is blocked.

Crystallins are the dominant structural components of the vertebrate eye lens. The chain is Beta-crystallin B2 from Aquarana catesbeiana (American bullfrog).